Reading from the N-terminus, the 342-residue chain is Holliday junction branch migration complex subunit RuvB (342 aa).

The interval 1-22 is disordered; the sequence is MTLKPVREVSPGSQEGEERLEQ. The interval 1-185 is large ATPase domain (RuvB-L); the sequence is MTLKPVREVS…FPIQERLGYY (185 aa). Residues leucine 24, arginine 25, glycine 66, lysine 69, threonine 70, serine 71, 132 to 134, arginine 175, tyrosine 185, and arginine 222 each bind ATP; that span reads EDY. Residue threonine 70 coordinates Mg(2+). The tract at residues 186–256 is small ATPAse domain (RuvB-S); sequence EPTELREIAV…IVETTLERLE (71 aa). Positions 259 to 342 are head domain (RuvB-H); sequence GRGLDAMDRR…RPQGKQGSLI (84 aa). DNA is bound by residues arginine 295, arginine 314, and arginine 319.

The protein belongs to the RuvB family. As to quaternary structure, homohexamer. Forms an RuvA(8)-RuvB(12)-Holliday junction (HJ) complex. HJ DNA is sandwiched between 2 RuvA tetramers; dsDNA enters through RuvA and exits via RuvB. An RuvB hexamer assembles on each DNA strand where it exits the tetramer. Each RuvB hexamer is contacted by two RuvA subunits (via domain III) on 2 adjacent RuvB subunits; this complex drives branch migration. In the full resolvosome a probable DNA-RuvA(4)-RuvB(12)-RuvC(2) complex forms which resolves the HJ.

It is found in the cytoplasm. The enzyme catalyses ATP + H2O = ADP + phosphate + H(+). The RuvA-RuvB-RuvC complex processes Holliday junction (HJ) DNA during genetic recombination and DNA repair, while the RuvA-RuvB complex plays an important role in the rescue of blocked DNA replication forks via replication fork reversal (RFR). RuvA specifically binds to HJ cruciform DNA, conferring on it an open structure. The RuvB hexamer acts as an ATP-dependent pump, pulling dsDNA into and through the RuvAB complex. RuvB forms 2 homohexamers on either side of HJ DNA bound by 1 or 2 RuvA tetramers; 4 subunits per hexamer contact DNA at a time. Coordinated motions by a converter formed by DNA-disengaged RuvB subunits stimulates ATP hydrolysis and nucleotide exchange. Immobilization of the converter enables RuvB to convert the ATP-contained energy into a lever motion, pulling 2 nucleotides of DNA out of the RuvA tetramer per ATP hydrolyzed, thus driving DNA branch migration. The RuvB motors rotate together with the DNA substrate, which together with the progressing nucleotide cycle form the mechanistic basis for DNA recombination by continuous HJ branch migration. Branch migration allows RuvC to scan DNA until it finds its consensus sequence, where it cleaves and resolves cruciform DNA. This is Holliday junction branch migration complex subunit RuvB from Anaeromyxobacter sp. (strain Fw109-5).